Reading from the N-terminus, the 535-residue chain is Ribonuclease Y (535 aa).

Residues 30 to 50 (IWALPALVIGLAIGAGIGILI) traverse the membrane as a helical segment. The 61-residue stretch at 225 to 285 (TVSTVALPSE…VRREVARLAL (61 aa)) folds into the KH domain. Residues 351-444 (VLQHSLECAL…VQAVDAISGG (94 aa)) enclose the HD domain.

Belongs to the RNase Y family.

Its subcellular location is the cell membrane. In terms of biological role, endoribonuclease that initiates mRNA decay. The sequence is that of Ribonuclease Y from Roseiflexus sp. (strain RS-1).